A 794-amino-acid polypeptide reads, in one-letter code: Copper-exporting P-type ATPase (794 aa).

2 consecutive HMA domains span residues 4–69 (TTLT…YDVA) and 71–137 (EQVE…YDAE). Cu(+) is bound by residues cysteine 15, cysteine 18, cysteine 82, and cysteine 85. 6 helical membrane passes run 161 to 181 (IISA…ISPI), 186 to 206 (ILVN…IIGW), 225 to 245 (VLVA…MMMW), 255 to 275 (LYFE…YLEA), 410 to 430 (YFVP…IIFV), and 437 to 457 (PALV…LGLA). The 4-aspartylphosphate intermediate role is filled by aspartate 494. Aspartate 689 and aspartate 693 together coordinate Mg(2+). The next 2 membrane-spanning stretches (helical) occupy residues 747–767 (LFWA…GLLA) and 773–789 (AAMA…ALRL).

This sequence belongs to the cation transport ATPase (P-type) (TC 3.A.3) family. Type IB subfamily.

The protein resides in the cell membrane. It catalyses the reaction Cu(+)(in) + ATP + H2O = Cu(+)(out) + ADP + phosphate + H(+). In terms of biological role, involved in copper export. The polypeptide is Copper-exporting P-type ATPase (copA) (Staphylococcus epidermidis (strain ATCC 35984 / DSM 28319 / BCRC 17069 / CCUG 31568 / BM 3577 / RP62A)).